Reading from the N-terminus, the 278-residue chain is Bicarbonate transport system permease protein CmpB (278 aa).

7 helical membrane passes run 24–44 (LDGILLPLAGILGFLIIWQIF), 93–113 (VAQGFSIAAIIGISVGILVGL), 124–144 (LFQFLRMIAPLAWVPIALVAF), 151–171 (AIFVIFITAVWPILINTAEGV), 196–216 (VVLPAALPYIFTGLRIAIGLS), 217–237 (WLAIIAAEIVMSGIVGIGFFI), and 249–269 (IILAVIYIGAVGLLLDRFVAW). One can recognise an ABC transmembrane type-1 domain in the interval 86 to 267 (TIASLTRVAQ…AVGLLLDRFV (182 aa)).

Belongs to the binding-protein-dependent transport system permease family. In terms of assembly, the complex is composed of two ATP-binding proteins (CmpC and CmpD), a transmembrane protein (CmpB) and a solute-binding protein (CmpA).

The protein resides in the cell inner membrane. Part of the ABC transporter complex CmpABCD involved in bicarbonate transport. Probably responsible for the translocation of the substrate across the membrane. In Synechococcus sp. (strain ATCC 27144 / PCC 6301 / SAUG 1402/1) (Anacystis nidulans), this protein is Bicarbonate transport system permease protein CmpB (cmpB).